Reading from the N-terminus, the 293-residue chain is 4-diphosphocytidyl-2-C-methyl-D-erythritol kinase (293 aa).

Lys-23 is a catalytic residue. 109 to 119 (PVAAGIGGGSA) is an ATP binding site. The active site involves Asp-151.

The protein belongs to the GHMP kinase family. IspE subfamily.

The catalysed reaction is 4-CDP-2-C-methyl-D-erythritol + ATP = 4-CDP-2-C-methyl-D-erythritol 2-phosphate + ADP + H(+). It participates in isoprenoid biosynthesis; isopentenyl diphosphate biosynthesis via DXP pathway; isopentenyl diphosphate from 1-deoxy-D-xylulose 5-phosphate: step 3/6. Functionally, catalyzes the phosphorylation of the position 2 hydroxy group of 4-diphosphocytidyl-2C-methyl-D-erythritol. The protein is 4-diphosphocytidyl-2-C-methyl-D-erythritol kinase of Rhizorhabdus wittichii (strain DSM 6014 / CCUG 31198 / JCM 15750 / NBRC 105917 / EY 4224 / RW1) (Sphingomonas wittichii).